Here is a 690-residue protein sequence, read N- to C-terminus: Dual specificity protein kinase lkh1 (690 aa).

The disordered stretch occupies residues 39-70 (PNLPPPFSVHQLQSFVPPQPPSSSSPSTTGTV). The Protein kinase domain occupies 362–682 (YTVVRLLGHG…AKEALWHPFF (321 aa)). ATP contacts are provided by residues 368 to 376 (LGHGTFGKV) and K391. The active-site Proton acceptor is D488.

This sequence belongs to the protein kinase superfamily. CMGC Ser/Thr protein kinase family. Lammer subfamily. Post-translationally, autophosphorylates on all three types of residues.

It carries out the reaction L-seryl-[protein] + ATP = O-phospho-L-seryl-[protein] + ADP + H(+). It catalyses the reaction L-threonyl-[protein] + ATP = O-phospho-L-threonyl-[protein] + ADP + H(+). The catalysed reaction is L-tyrosyl-[protein] + ATP = O-phospho-L-tyrosyl-[protein] + ADP + H(+). Its function is as follows. Protein kinase that may act as a negative regulator of filamentous growth and flocculation. Appears to have a role in normal cell wall and septum formation and in cell separation. May have antagonistic function in the regulation of beta-glucan distribution between the sites for cell wall and septum assembly. This chain is Dual specificity protein kinase lkh1 (lkh1), found in Schizosaccharomyces pombe (strain 972 / ATCC 24843) (Fission yeast).